Reading from the N-terminus, the 486-residue chain is 23S rRNA (uracil(1939)-C(5))-methyltransferase RlmD (486 aa).

One can recognise a TRAM domain in the interval 14 to 76 (AAQDGSGLPE…NHWEQANLTA (63 aa)). [4Fe-4S] cluster-binding residues include C89, C99, C102, and C181. Positions 289, 318, 323, 339, 374, and 395 each coordinate S-adenosyl-L-methionine. The active-site Nucleophile is the C442.

The protein belongs to the class I-like SAM-binding methyltransferase superfamily. RNA M5U methyltransferase family. RlmD subfamily.

The catalysed reaction is uridine(1939) in 23S rRNA + S-adenosyl-L-methionine = 5-methyluridine(1939) in 23S rRNA + S-adenosyl-L-homocysteine + H(+). Catalyzes the formation of 5-methyl-uridine at position 1939 (m5U1939) in 23S rRNA. The sequence is that of 23S rRNA (uracil(1939)-C(5))-methyltransferase RlmD from Verminephrobacter eiseniae (strain EF01-2).